The chain runs to 172 residues: RNA silencing suppressor p19 (172 aa).

2 stretches are compositionally biased toward basic and acidic residues: residues 1–14 and 150–172; these read MERA…REQA and SERE…EESE. Disordered regions lie at residues 1–34 and 145–172; these read MERA…KLPD and LQPT…EESE.

This sequence belongs to the tombusvirus protein p19 family. In terms of assembly, homodimer.

Functionally, viral suppressor of RNA silencing which binds specifically to silencing RNAs (siRNAs). Acts as a molecular caliper to specifically select siRNAs based on the length of the duplex region of the RNA. This chain is RNA silencing suppressor p19, found in Cymbidium ringspot virus (CymRSV).